The chain runs to 79 residues: MTQSVLLPPGPFTRRQAQAVTTTYSNITLEDDQGSHFRLVVRDTEGRMVWRAWNFEPDAGEGLNRYIRTSGIRTDTATR.

It belongs to the UPF0401 family.

In Escherichia coli (strain K12), this protein is UPF0401 protein YkfF (ykfF).